Here is a 479-residue protein sequence, read N- to C-terminus: UDP-N-acetylmuramoyl-L-alanyl-D-glutamate--2,6-diaminopimelate ligase (479 aa).

Ser-21 contacts UDP-N-acetyl-alpha-D-muramoyl-L-alanyl-D-glutamate. An ATP-binding site is contributed by 98 to 104 (GTNGKSS). Residues 144-145 (TT), Ser-171, Gln-177, and Arg-179 each bind UDP-N-acetyl-alpha-D-muramoyl-L-alanyl-D-glutamate. Lys-211 bears the N6-carboxylysine mark. Residues Arg-372, 396 to 399 (DNPR), Gly-446, and Glu-450 each bind meso-2,6-diaminopimelate. A Meso-diaminopimelate recognition motif motif is present at residues 396–399 (DNPR).

Belongs to the MurCDEF family. MurE subfamily. It depends on Mg(2+) as a cofactor. Post-translationally, carboxylation is probably crucial for Mg(2+) binding and, consequently, for the gamma-phosphate positioning of ATP.

It is found in the cytoplasm. It carries out the reaction UDP-N-acetyl-alpha-D-muramoyl-L-alanyl-D-glutamate + meso-2,6-diaminopimelate + ATP = UDP-N-acetyl-alpha-D-muramoyl-L-alanyl-gamma-D-glutamyl-meso-2,6-diaminopimelate + ADP + phosphate + H(+). It participates in cell wall biogenesis; peptidoglycan biosynthesis. Functionally, catalyzes the addition of meso-diaminopimelic acid to the nucleotide precursor UDP-N-acetylmuramoyl-L-alanyl-D-glutamate (UMAG) in the biosynthesis of bacterial cell-wall peptidoglycan. The polypeptide is UDP-N-acetylmuramoyl-L-alanyl-D-glutamate--2,6-diaminopimelate ligase (Rickettsia montanensis).